A 68-amino-acid chain; its full sequence is Large ribosomal subunit protein uL29 (68 aa).

This sequence belongs to the universal ribosomal protein uL29 family.

The chain is Large ribosomal subunit protein uL29 from Geobacillus sp. (strain WCH70).